The chain runs to 95 residues: Co-chaperonin GroES (95 aa).

It belongs to the GroES chaperonin family. In terms of assembly, heptamer of 7 subunits arranged in a ring. Interacts with the chaperonin GroEL.

Its subcellular location is the cytoplasm. Functionally, together with the chaperonin GroEL, plays an essential role in assisting protein folding. The GroEL-GroES system forms a nano-cage that allows encapsulation of the non-native substrate proteins and provides a physical environment optimized to promote and accelerate protein folding. GroES binds to the apical surface of the GroEL ring, thereby capping the opening of the GroEL channel. The protein is Co-chaperonin GroES of Ruthia magnifica subsp. Calyptogena magnifica.